Here is a 102-residue protein sequence, read N- to C-terminus: Small ribosomal subunit protein uS10 (102 aa).

The protein belongs to the universal ribosomal protein uS10 family. In terms of assembly, part of the 30S ribosomal subunit.

Its function is as follows. Involved in the binding of tRNA to the ribosomes. This is Small ribosomal subunit protein uS10 from Nitrosospira multiformis (strain ATCC 25196 / NCIMB 11849 / C 71).